Consider the following 158-residue polypeptide: Transcription elongation factor GreA (158 aa).

This sequence belongs to the GreA/GreB family.

Necessary for efficient RNA polymerase transcription elongation past template-encoded arresting sites. The arresting sites in DNA have the property of trapping a certain fraction of elongating RNA polymerases that pass through, resulting in locked ternary complexes. Cleavage of the nascent transcript by cleavage factors such as GreA or GreB allows the resumption of elongation from the new 3'terminus. GreA releases sequences of 2 to 3 nucleotides. The polypeptide is Transcription elongation factor GreA (Pelagibacter ubique (strain HTCC1062)).